A 180-amino-acid chain; its full sequence is Crossover junction endodeoxyribonuclease RuvC (180 aa).

Residues aspartate 7, glutamate 66, and aspartate 138 contribute to the active site. Mg(2+) is bound by residues aspartate 7, glutamate 66, and aspartate 138.

This sequence belongs to the RuvC family. Homodimer which binds Holliday junction (HJ) DNA. The HJ becomes 2-fold symmetrical on binding to RuvC with unstacked arms; it has a different conformation from HJ DNA in complex with RuvA. In the full resolvosome a probable DNA-RuvA(4)-RuvB(12)-RuvC(2) complex forms which resolves the HJ. It depends on Mg(2+) as a cofactor.

The protein resides in the cytoplasm. It carries out the reaction Endonucleolytic cleavage at a junction such as a reciprocal single-stranded crossover between two homologous DNA duplexes (Holliday junction).. In terms of biological role, the RuvA-RuvB-RuvC complex processes Holliday junction (HJ) DNA during genetic recombination and DNA repair. Endonuclease that resolves HJ intermediates. Cleaves cruciform DNA by making single-stranded nicks across the HJ at symmetrical positions within the homologous arms, yielding a 5'-phosphate and a 3'-hydroxyl group; requires a central core of homology in the junction. The consensus cleavage sequence is 5'-(A/T)TT(C/G)-3'. Cleavage occurs on the 3'-side of the TT dinucleotide at the point of strand exchange. HJ branch migration catalyzed by RuvA-RuvB allows RuvC to scan DNA until it finds its consensus sequence, where it cleaves and resolves the cruciform DNA. This is Crossover junction endodeoxyribonuclease RuvC from Burkholderia thailandensis (strain ATCC 700388 / DSM 13276 / CCUG 48851 / CIP 106301 / E264).